Consider the following 663-residue polypeptide: MAU2 chromatid cohesion factor homolog (663 aa).

TPR repeat units follow at residues 455 to 488 (GGFY…ANAE) and 495 to 528 (SCSL…ASKI).

The protein belongs to the SCC4/mau-2 family. As to quaternary structure, interacts with Nipped-B to form the cohesin loading complex.

Its subcellular location is the nucleus. It is found in the nucleoplasm. In terms of biological role, required for association of the cohesin complex with chromatin during interphase. Plays a role in sister chromatid cohesion and normal progression through prometaphase. In Drosophila willistoni (Fruit fly), this protein is MAU2 chromatid cohesion factor homolog.